The primary structure comprises 252 residues: Flagellar L-ring protein (252 aa).

An N-terminal signal peptide occupies residues 1–25 (MSKSVPLQRIVLVAALMATGGLAGG). Cys26 is lipidated: N-palmitoyl cysteine. Cys26 carries S-diacylglycerol cysteine lipidation.

It belongs to the FlgH family. The basal body constitutes a major portion of the flagellar organelle and consists of four rings (L,P,S, and M) mounted on a central rod.

Its subcellular location is the cell outer membrane. The protein resides in the bacterial flagellum basal body. Assembles around the rod to form the L-ring and probably protects the motor/basal body from shearing forces during rotation. The chain is Flagellar L-ring protein from Rhodopseudomonas palustris (strain ATCC BAA-98 / CGA009).